The sequence spans 688 residues: ATP-dependent zinc metalloprotease FTSH 6, chloroplastic (688 aa).

Residues 1–75 constitute a chloroplast transit peptide; the sequence is MKMASSSSAL…GFTSALGTVL (75 aa). Over residues 25–36 the composition is skewed to polar residues; that stretch reads QQFQKPASLSKS. Positions 25 to 44 are disordered; it reads QQFQKPASLSKSSHTHKPSL. The transit peptide at 76 to 83 directs the protein to the thylakoid; the sequence is AHPAKAEP. Residues 84–168 lie on the Lumenal, thylakoid side of the membrane; sequence EAPIEATSNR…AHPMNVNWGA (85 aa). A helical transmembrane segment spans residues 169-189; sequence FLLNFLGNLGFPLILLVSLLL. Topologically, residues 190 to 688 are stromal; the sequence is TSSSRRNPAG…RIRINDLISV (499 aa). Position 264-271 (264-271) interacts with ATP; it reads GPPGTGKT. Residue histidine 485 participates in Zn(2+) binding. The active site involves glutamate 486. Positions 489 and 563 each coordinate Zn(2+).

The protein in the N-terminal section; belongs to the AAA ATPase family. It in the C-terminal section; belongs to the peptidase M41 family. Zn(2+) serves as cofactor.

The protein localises to the plastid. Its subcellular location is the chloroplast thylakoid membrane. Probable ATP-dependent zinc metallopeptidase. Involved in the degradation of the light-harvesting complex of photosystem II (LHC II) during senescence or high light acclimation. The chain is ATP-dependent zinc metalloprotease FTSH 6, chloroplastic (FTSH6) from Arabidopsis thaliana (Mouse-ear cress).